The sequence spans 54 residues: Large ribosomal subunit protein uL15 (54 aa).

Positions 1–30 (MPSRLRXTRKLRGHVSHGHGRIGKHRKHPG) are enriched in basic residues. Positions 1–42 (MPSRLRXTRKLRGHVSHGHGRIGKHRKHPGGRGNAGGMHHHR) are disordered. Histidine 39 bears the (3S)-3-hydroxyhistidine mark. The residue at position 47 (lysine 47) is an N6-acetyllysine.

It belongs to the universal ribosomal protein uL15 family. As to quaternary structure, component of the large ribosomal subunit. Hydroxylated on His-39 by MINA.

Its subcellular location is the cytoplasm. Its function is as follows. Component of the large ribosomal subunit. The ribosome is a large ribonucleoprotein complex responsible for the synthesis of proteins in the cell. The sequence is that of Large ribosomal subunit protein uL15 (RPL27A) from Sus scrofa (Pig).